Here is a 2167-residue protein sequence, read N- to C-terminus: GTPase-activating protein BEM2/IPL2 (2167 aa).

Disordered regions lie at residues 1–209, 243–305, and 353–372; these read MKGL…NDNE, TNYN…ASAR, and NSSI…NNQA. A compositionally biased stretch (low complexity) spans 12–51; sequence SSTASASSSSTSTSHKTTTASTASSSSPSSSSQTIRNSTS. K27 is covalently cross-linked (Glycyl lysine isopeptide (Lys-Gly) (interchain with G-Cter in ubiquitin)). Basic residues predominate over residues 58 to 70; the sequence is HSHHHHGQGHSHH. Polar residues predominate over residues 89–118; that stretch reads KQYTSTSSSQVNLGMYHSDTNTRSSRSIAS. Residue S129 is modified to Phosphoserine. Polar residues predominate over residues 134-145; it reads SNSSSQKSNAQD. 2 stretches are compositionally biased toward low complexity: residues 160-177 and 187-207; these read SLLP…SRCS and NTSG…NNND. Over residues 243–252 the composition is skewed to polar residues; that stretch reads TNYNSSMTAP. At S283 the chain carries Phosphoserine. A compositionally biased stretch (low complexity) spans 289–300; it reads SSSTTATNSGND. The Ras-GEF domain occupies 592–859; it reads DITTLADEVH…MKLSVQHEPP (268 aa). Residues S1012 and S1016 each carry the phosphoserine modification. T1038 bears the Phosphothreonine mark. 3 positions are modified to phosphoserine: S1046, S1054, and S1128. A compositionally biased stretch (polar residues) spans 1771–1794; it reads ISGTHSDNDHSYNINKNTGQTPSL. A disordered region spans residues 1771-1828; sequence ISGTHSDNDHSYNINKNTGQTPSLGSVMESNNSARNRRDSRASFSTNRSSVVSNSSHN. Over residues 1812–1828 the composition is skewed to low complexity; it reads ASFSTNRSSVVSNSSHN. Residues 1846–1948 form the PH domain; the sequence is GFNTSSSNYS…WIKMIKASKR (103 aa). A Rho-GAP domain is found at 1967 to 2165; it reads VPLEDVCERE…DFIKNPNDYF (199 aa).

Functionally, GTPase-activating protein (GAP) for RHO1 and RHO2. Involved in the control of cellular morphogenesis. Required for proper bud site selection and bud emergence. The polypeptide is GTPase-activating protein BEM2/IPL2 (BEM2) (Saccharomyces cerevisiae (strain ATCC 204508 / S288c) (Baker's yeast)).